A 216-amino-acid chain; its full sequence is Probable transaldolase (216 aa).

Lys-83 acts as the Schiff-base intermediate with substrate in catalysis.

Belongs to the transaldolase family. Type 3B subfamily.

The protein resides in the cytoplasm. It catalyses the reaction D-sedoheptulose 7-phosphate + D-glyceraldehyde 3-phosphate = D-erythrose 4-phosphate + beta-D-fructose 6-phosphate. It participates in carbohydrate degradation; pentose phosphate pathway; D-glyceraldehyde 3-phosphate and beta-D-fructose 6-phosphate from D-ribose 5-phosphate and D-xylulose 5-phosphate (non-oxidative stage): step 2/3. Functionally, transaldolase is important for the balance of metabolites in the pentose-phosphate pathway. This is Probable transaldolase from Desulforamulus reducens (strain ATCC BAA-1160 / DSM 100696 / MI-1) (Desulfotomaculum reducens).